We begin with the raw amino-acid sequence, 273 residues long: Large ribosomal subunit protein uL2 (273 aa).

The interval 224 to 260 (AMNPVDHPHGGGEGKTSGGRHPVTPWGKKTKGKKTRK) is disordered. A compositionally biased stretch (basic residues) spans 251–260 (KKTKGKKTRK).

Belongs to the universal ribosomal protein uL2 family. In terms of assembly, part of the 50S ribosomal subunit. Forms a bridge to the 30S subunit in the 70S ribosome.

One of the primary rRNA binding proteins. Required for association of the 30S and 50S subunits to form the 70S ribosome, for tRNA binding and peptide bond formation. It has been suggested to have peptidyltransferase activity; this is somewhat controversial. Makes several contacts with the 16S rRNA in the 70S ribosome. This Orientia tsutsugamushi (strain Ikeda) (Rickettsia tsutsugamushi) protein is Large ribosomal subunit protein uL2.